The primary structure comprises 308 residues: Ribosomal RNA small subunit methyltransferase H (308 aa).

Residues 36 to 38 (GGH), aspartate 55, phenylalanine 82, aspartate 103, and glutamine 110 contribute to the S-adenosyl-L-methionine site.

The protein belongs to the methyltransferase superfamily. RsmH family.

The protein resides in the cytoplasm. It carries out the reaction cytidine(1402) in 16S rRNA + S-adenosyl-L-methionine = N(4)-methylcytidine(1402) in 16S rRNA + S-adenosyl-L-homocysteine + H(+). Its function is as follows. Specifically methylates the N4 position of cytidine in position 1402 (C1402) of 16S rRNA. The polypeptide is Ribosomal RNA small subunit methyltransferase H (Helicobacter pylori (strain J99 / ATCC 700824) (Campylobacter pylori J99)).